Reading from the N-terminus, the 374-residue chain is MALPTPSDSTLPAEARGRGRRRRLVWTPSQSEALRACFERNPYPGIATRERLAQAIGIPEPRVQIWFQNERSRQLRQHRRESRPWPGRRGPPEGRRKRTAVTGSQTALLLRAFEKDRFPGIAAREELARETGLPESRIQIWFQNRRARHPGQGGRAPAQAGGLCSAAPGGGHPAPSWVAFAHTGAWGTGLPAPHVPCAPGALPQGAFVSQAARAAPALQPSQAAPAEGISQPAPARGDFAYAAPAPPDGALSHPQAPRWPPHPGKSREDRDPQRDGLPGPCAVAQPGPAQAGPQGQGVLAPPTSQGSPWWGWGRGPQVAGAAWEPQAGAAPPPQPAPPDASAASTDASHPGASQPLQEPGRSSTVTSSLLYELL.

The span at 1–10 shows a compositional bias: polar residues; that stretch reads MALPTPSDST. Disordered regions lie at residues 1–24, 72–102, and 218–374; these read MALP…RRRL, SRQL…TAVT, and LQPS…YELL. 2 consecutive DNA-binding regions (homeobox) follow at residues 19–78 and 94–153; these read GRRR…LRQH and GRRK…PGQG. The span at 265-274 shows a compositional bias: basic and acidic residues; that stretch reads KSREDRDPQR. Low complexity-rich tracts occupy residues 278–302 and 319–329; these read PGPC…LAPP and AGAAWEPQAGA. A compositionally biased stretch (polar residues) spans 354–374; that stretch reads QPLQEPGRSSTVTSSLLYELL.

In terms of assembly, may interact with MYF5; regulates MYF5 expression. Expressed in muscles, as well as in primary myoblasts and myotubes (at protein level).

It localises to the nucleus. It is found in the cytoplasm. Its function is as follows. Down-regulates MYOD1 expression and may up-regulate MYF5 expression. May regulate microRNA (miRNA) transcription, up-regulating the expression of some myogenic miRNAs, including MIR1-1, MIR133A2, MIR133B and MIR206. Impairs the differentiation of myoblasts and may be involved in muscle regeneration. Reduces DUX4-induced nuclear localization of CTNNB1/beta-catenin and its subsequent activation of target genes. This chain is Double homeobox protein 4C (DUX4L9), found in Homo sapiens (Human).